The following is a 431-amino-acid chain: Glutamate-1-semialdehyde 2,1-aminomutase 2 (431 aa).

At K268 the chain carries N6-(pyridoxal phosphate)lysine.

The protein belongs to the class-III pyridoxal-phosphate-dependent aminotransferase family. HemL subfamily. In terms of assembly, homodimer. The cofactor is pyridoxal 5'-phosphate.

The protein localises to the cytoplasm. The enzyme catalyses (S)-4-amino-5-oxopentanoate = 5-aminolevulinate. The protein operates within porphyrin-containing compound metabolism; protoporphyrin-IX biosynthesis; 5-aminolevulinate from L-glutamyl-tRNA(Glu): step 2/2. The protein is Glutamate-1-semialdehyde 2,1-aminomutase 2 of Bacillus licheniformis (strain ATCC 14580 / DSM 13 / JCM 2505 / CCUG 7422 / NBRC 12200 / NCIMB 9375 / NCTC 10341 / NRRL NRS-1264 / Gibson 46).